Here is a 181-residue protein sequence, read N- to C-terminus: Large ribosomal subunit protein uL5 (181 aa).

Belongs to the universal ribosomal protein uL5 family. As to quaternary structure, part of the 50S ribosomal subunit; part of the 5S rRNA/L5/L18/L25 subcomplex. Contacts the 5S rRNA and the P site tRNA. Forms a bridge to the 30S subunit in the 70S ribosome.

In terms of biological role, this is one of the proteins that bind and probably mediate the attachment of the 5S RNA into the large ribosomal subunit, where it forms part of the central protuberance. In the 70S ribosome it contacts protein S13 of the 30S subunit (bridge B1b), connecting the 2 subunits; this bridge is implicated in subunit movement. Contacts the P site tRNA; the 5S rRNA and some of its associated proteins might help stabilize positioning of ribosome-bound tRNAs. The sequence is that of Large ribosomal subunit protein uL5 from Sulfurovum sp. (strain NBC37-1).